Reading from the N-terminus, the 279-residue chain is UPF0276 protein SO_2008 (279 aa).

The protein belongs to the UPF0276 family.

The chain is UPF0276 protein SO_2008 from Shewanella oneidensis (strain ATCC 700550 / JCM 31522 / CIP 106686 / LMG 19005 / NCIMB 14063 / MR-1).